The primary structure comprises 1616 residues: S-layer-related protein (1616 aa).

A signal peptide spans Met1–Ala30. In terms of domain architecture, BIG2 spans Val1115–Glu1185. Disordered regions lie at residues Ala1191–Asn1244, Asn1372–Arg1455, Ala1523–Gly1554, and Phe1585–Cys1616. Residues Ser1199 to Ala1225 show a composition bias toward gly residues. Over residues Asn1372 to Lys1387 the composition is skewed to basic residues. Residues Pro1406–Ala1416 show a composition bias toward low complexity. Positions Trp1438 to Asp1502 constitute an SLH domain. The segment covering Arg1536–Gly1554 has biased composition (basic and acidic residues). The span at Gly1594–Cys1616 shows a compositional bias: basic residues.

It is found in the secreted. The protein resides in the cell wall. The protein localises to the S-layer. The S-layer is a paracrystalline mono-layered assembly of proteins which coats the surface of bacteria. May play a role in the export of butirosin from the organism. The protein is S-layer-related protein (butB) of Niallia circulans (Bacillus circulans).